A 197-amino-acid chain; its full sequence is MSRLVQTMLLWLKSEKGFDTTEASDGPELQKSICDKRWSPCCTLVRLYARMGLHRYNLLKLSRVKKYNMSTHYAAFATTHRSNGKYHDLSDLKIFESSEDVEPPNEVSLNVINVIVYIVYKDFYESRLVRMLIAKLLLNEASMSIMDASLSRVEIRLSNPIWVWSDIYECPTQKLNDMSFSYIPETYLVIKIKSTKY.

It belongs to the UPF0725 (EMB2204) family.

This is UPF0725 protein At5g41640 from Arabidopsis thaliana (Mouse-ear cress).